Reading from the N-terminus, the 741-residue chain is Cysteine--tRNA ligase, cytoplasmic (741 aa).

Cys46 is a Zn(2+) binding site. The short motif at 48 to 58 (PTVYDASHMGH) is the 'HIGH' region element. Ser297 is subject to Phosphoserine. Cys340, His365, and Glu369 together coordinate Zn(2+). Positions 398-402 (KMSKS) match the 'KMSKS' region motif. Lys401 provides a ligand contact to ATP. The interval 697–718 (FDENGLPTHDKEGKEVSKGQIK) is disordered. Positions 704–713 (THDKEGKEVS) are enriched in basic and acidic residues.

Belongs to the class-I aminoacyl-tRNA synthetase family. The cofactor is Zn(2+).

Its subcellular location is the cytoplasm. It catalyses the reaction tRNA(Cys) + L-cysteine + ATP = L-cysteinyl-tRNA(Cys) + AMP + diphosphate. The chain is Cysteine--tRNA ligase, cytoplasmic from Drosophila melanogaster (Fruit fly).